The chain runs to 121 residues: uncharacterized protein (121 aa).

This is an uncharacterized protein from Schizosaccharomyces pombe (strain 972 / ATCC 24843) (Fission yeast).